A 715-amino-acid polypeptide reads, in one-letter code: Ribosomal RNA large subunit methyltransferase K/L (715 aa).

One can recognise a THUMP domain in the interval 47 to 158 (LGYKISLWTR…RDNVTIFLDF (112 aa)).

The protein belongs to the methyltransferase superfamily. RlmKL family.

It is found in the cytoplasm. It carries out the reaction guanosine(2445) in 23S rRNA + S-adenosyl-L-methionine = N(2)-methylguanosine(2445) in 23S rRNA + S-adenosyl-L-homocysteine + H(+). The enzyme catalyses guanosine(2069) in 23S rRNA + S-adenosyl-L-methionine = N(2)-methylguanosine(2069) in 23S rRNA + S-adenosyl-L-homocysteine + H(+). Functionally, specifically methylates the guanine in position 2445 (m2G2445) and the guanine in position 2069 (m7G2069) of 23S rRNA. This chain is Ribosomal RNA large subunit methyltransferase K/L, found in Colwellia psychrerythraea (strain 34H / ATCC BAA-681) (Vibrio psychroerythus).